Here is a 154-residue protein sequence, read N- to C-terminus: Superoxide dismutase [Cu-Zn] (154 aa).

Cu cation-binding residues include H47, H49, and H64. C58 and C147 are joined by a disulfide. 4 residues coordinate Zn(2+): H64, H72, H81, and D84. Residue H121 coordinates Cu cation. R144 serves as a coordination point for substrate.

It belongs to the Cu-Zn superoxide dismutase family. In terms of assembly, homodimer. Requires Cu cation as cofactor. Zn(2+) is required as a cofactor.

The protein localises to the cytoplasm. It carries out the reaction 2 superoxide + 2 H(+) = H2O2 + O2. Functionally, destroys radicals which are normally produced within the cells and which are toxic to biological systems. The sequence is that of Superoxide dismutase [Cu-Zn] (sodC) from Aspergillus fumigatus (strain ATCC MYA-4609 / CBS 101355 / FGSC A1100 / Af293) (Neosartorya fumigata).